A 278-amino-acid polypeptide reads, in one-letter code: Tryptophan synthase alpha chain (278 aa).

Active-site proton acceptor residues include Glu61 and Asp72.

This sequence belongs to the TrpA family. As to quaternary structure, tetramer of two alpha and two beta chains.

The enzyme catalyses (1S,2R)-1-C-(indol-3-yl)glycerol 3-phosphate + L-serine = D-glyceraldehyde 3-phosphate + L-tryptophan + H2O. It participates in amino-acid biosynthesis; L-tryptophan biosynthesis; L-tryptophan from chorismate: step 5/5. Its function is as follows. The alpha subunit is responsible for the aldol cleavage of indoleglycerol phosphate to indole and glyceraldehyde 3-phosphate. This chain is Tryptophan synthase alpha chain, found in Shewanella oneidensis (strain ATCC 700550 / JCM 31522 / CIP 106686 / LMG 19005 / NCIMB 14063 / MR-1).